We begin with the raw amino-acid sequence, 506 residues long: Glutamate--tRNA ligase (506 aa).

The 'HIGH' region motif lies at 24-34 (PSPTGTPHVGL). A disordered region spans residues 124–147 (TPEEVEQRHRAKGEDPKRGYDNYD). Over residues 128 to 147 (VEQRHRAKGEDPKRGYDNYD) the composition is skewed to basic and acidic residues. Positions 268 to 272 (KLSKR) match the 'KMSKS' region motif. Residue Lys271 participates in ATP binding.

It belongs to the class-I aminoacyl-tRNA synthetase family. Glutamate--tRNA ligase type 1 subfamily. Monomer.

The protein resides in the cytoplasm. It carries out the reaction tRNA(Glu) + L-glutamate + ATP = L-glutamyl-tRNA(Glu) + AMP + diphosphate. Catalyzes the attachment of glutamate to tRNA(Glu) in a two-step reaction: glutamate is first activated by ATP to form Glu-AMP and then transferred to the acceptor end of tRNA(Glu). This chain is Glutamate--tRNA ligase, found in Kocuria rhizophila (strain ATCC 9341 / DSM 348 / NBRC 103217 / DC2201).